Consider the following 213-residue polypeptide: Kynurenine formamidase (213 aa).

Position 20 (tryptophan 20) interacts with substrate. 3 residues coordinate Zn(2+): histidine 50, histidine 54, and aspartate 56. Histidine 60 acts as the Proton donor/acceptor in catalysis. Positions 161 and 173 each coordinate Zn(2+).

The protein belongs to the Cyclase 1 superfamily. KynB family. As to quaternary structure, homodimer. Zn(2+) serves as cofactor.

The catalysed reaction is N-formyl-L-kynurenine + H2O = L-kynurenine + formate + H(+). It functions in the pathway amino-acid degradation; L-tryptophan degradation via kynurenine pathway; L-kynurenine from L-tryptophan: step 2/2. Functionally, catalyzes the hydrolysis of N-formyl-L-kynurenine to L-kynurenine, the second step in the kynurenine pathway of tryptophan degradation. The polypeptide is Kynurenine formamidase (Pseudomonas aeruginosa (strain ATCC 15692 / DSM 22644 / CIP 104116 / JCM 14847 / LMG 12228 / 1C / PRS 101 / PAO1)).